The chain runs to 265 residues: SPbeta prophage-derived uncharacterized protein YomU (265 aa).

Residues 238–265 (KADGTKGVVTSDEGTGSSQSSDLGGTTE) form a disordered region. A compositionally biased stretch (polar residues) spans 249–265 (DEGTGSSQSSDLGGTTE).

This chain is SPbeta prophage-derived uncharacterized protein YomU (yomU), found in Bacillus subtilis (strain 168).